Here is a 524-residue protein sequence, read N- to C-terminus: Chromosomal replication initiator protein DnaA (524 aa).

The tract at residues 1–105 (MSQNSSSLLE…EQEIPETPAQ (105 aa)) is domain I, interacts with DnaA modulators. The disordered stretch occupies residues 95–183 (PEQEIPETPA…PAHNPNREVS (89 aa)). Residues 106-182 (QEFKYQPDAP…TPAHNPNREV (77 aa)) form a domain II region. Over residues 148–158 (APEPHPAPIAD) the composition is skewed to pro residues. Positions 183–399 (SLNPKYTFES…GALIRVSAYS (217 aa)) are domain III, AAA+ region. 4 residues coordinate ATP: Gly227, Gly229, Lys230, and Thr231. Residues 400-524 (SLINQPIDKE…TQLIKSRGRN (125 aa)) are domain IV, binds dsDNA.

The protein belongs to the DnaA family. Oligomerizes as a right-handed, spiral filament on DNA at oriC.

The protein resides in the cytoplasm. Plays an essential role in the initiation and regulation of chromosomal replication. ATP-DnaA binds to the origin of replication (oriC) to initiate formation of the DNA replication initiation complex once per cell cycle. Binds the DnaA box (a 9 base pair repeat at the origin) and separates the double-stranded (ds)DNA. Forms a right-handed helical filament on oriC DNA; dsDNA binds to the exterior of the filament while single-stranded (ss)DNA is stabiized in the filament's interior. The ATP-DnaA-oriC complex binds and stabilizes one strand of the AT-rich DNA unwinding element (DUE), permitting loading of DNA polymerase. After initiation quickly degrades to an ADP-DnaA complex that is not apt for DNA replication. Binds acidic phospholipids. The protein is Chromosomal replication initiator protein DnaA of Corynebacterium glutamicum (strain R).